The primary structure comprises 320 residues: Malate dehydrogenase (320 aa).

NAD(+) contacts are provided by residues 10–15 and aspartate 34; that span reads GAGQIG. Residues arginine 83 and arginine 89 each contribute to the substrate site. Residues asparagine 96 and 119-121 contribute to the NAD(+) site; that span reads ITN. Residues asparagine 121 and arginine 152 each contribute to the substrate site. Catalysis depends on histidine 176, which acts as the Proton acceptor.

This sequence belongs to the LDH/MDH superfamily. MDH type 3 family.

The catalysed reaction is (S)-malate + NAD(+) = oxaloacetate + NADH + H(+). In terms of biological role, catalyzes the reversible oxidation of malate to oxaloacetate. In Methylobacterium sp. (strain 4-46), this protein is Malate dehydrogenase.